We begin with the raw amino-acid sequence, 211 residues long: Uracil phosphoribosyltransferase (211 aa).

5-phospho-alpha-D-ribose 1-diphosphate is bound by residues arginine 77, arginine 102, and 129 to 137 (DPMLATGGS). Residues isoleucine 192 and 197–199 (GDA) each bind uracil. Aspartate 198 contributes to the 5-phospho-alpha-D-ribose 1-diphosphate binding site.

This sequence belongs to the UPRTase family. Requires Mg(2+) as cofactor.

The enzyme catalyses UMP + diphosphate = 5-phospho-alpha-D-ribose 1-diphosphate + uracil. The protein operates within pyrimidine metabolism; UMP biosynthesis via salvage pathway; UMP from uracil: step 1/1. Allosterically activated by GTP. In terms of biological role, catalyzes the conversion of uracil and 5-phospho-alpha-D-ribose 1-diphosphate (PRPP) to UMP and diphosphate. This chain is Uracil phosphoribosyltransferase, found in Corynebacterium efficiens (strain DSM 44549 / YS-314 / AJ 12310 / JCM 11189 / NBRC 100395).